A 333-amino-acid chain; its full sequence is Arylacetonitrilase (333 aa).

The region spanning Val9–Met284 is the CN hydrolase domain. Glu49 functions as the Proton acceptor in the catalytic mechanism. Residue Lys129 is part of the active site. Residue Cys164 is the Nucleophile of the active site.

It belongs to the carbon-nitrogen hydrolase superfamily. Nitrilase family.

It carries out the reaction a nitrile + 2 H2O = a carboxylate + NH4(+). The catalysed reaction is 4-chlorophenylacetonitrile + 2 H2O = 4-chlorophenylacetate + NH4(+). Functionally, nitrilase that hydrolyzes preferentially phenylacetonitrile, (R,S)-mandelonitrile, and 3-indolylacetonitrile. The chain is Arylacetonitrilase from Aspergillus oryzae (strain ATCC 42149 / RIB 40) (Yellow koji mold).